The following is a 256-amino-acid chain: Tetraspanin-32 (256 aa).

A run of 4 helical transmembrane segments spans residues 15–35, 61–81, 90–110, and 203–223; these read LITN…VVVI, AFYV…LSTI, LMAA…QVAF, and CTSL…WFAI.

The protein belongs to the tetraspanin (TM4SF) family. Expressed exclusively in hematopoietic tissues. Expression detected in spleen, thymus, bone marrow and peripheral blood leukocytes but not in heart, brain, lung, liver, kidney or testis.

Its subcellular location is the membrane. The protein is Tetraspanin-32 (Tspan32) of Mus musculus (Mouse).